The primary structure comprises 623 residues: Endoglucanase 12 (623 aa).

At 1 to 73 (MYSANHWGGS…LGCVVVKRKL (73 aa)) the chain is on the cytoplasmic side. A helical; Signal-anchor for type II membrane protein transmembrane segment spans residues 74 to 94 (LWWVLWTLLAAFILIGLPVII). At 95 to 623 (AKSIPKKKPH…TPPPPSKWKP (529 aa)) the chain is on the extracellular side. Catalysis depends on aspartate 166, which acts as the Nucleophile. N-linked (GlcNAc...) asparagine glycans are attached at residues asparagine 217, asparagine 236, asparagine 324, asparagine 345, asparagine 408, and asparagine 425. Residues histidine 513, aspartate 561, and glutamate 570 contribute to the active site.

This sequence belongs to the glycosyl hydrolase 9 (cellulase E) family. As to expression, ubiquitous.

The protein resides in the membrane. The enzyme catalyses Endohydrolysis of (1-&gt;4)-beta-D-glucosidic linkages in cellulose, lichenin and cereal beta-D-glucans.. The protein is Endoglucanase 12 (GLU3) of Oryza sativa subsp. japonica (Rice).